The sequence spans 650 residues: MNTSILAILFLIQCVFTLGLHFHPLDPLTPQEINKTSFIVKKSHLGNLKDLTFHYLDLEEPNKSHVLQWLSPNPSKKPPPPRRRSFVVVRAGGQTYELIIDLTTSKIASSRIYTGHGFPSFTFIELFKASKLPLTYPPFKKSILDRSLNISEVSCIPFTVGWYGETTTRRELKASCFYRDGSVNVFTRPIEGITVTIDVDSMQVIKYSDRFRKPIPDKEGNDFRTKHRPFPFFCNVSDTGFKILGNRVKWANWKFHVGFTARAGVTISTASVLDPRTKRFRRVMYRGHVSETFVPYMDPTYEWYYRTFMDIGEFGFGRSAVNLQPLIDCPQNAAFLDGHVAGPDGTAQKMTNVMCVFEKNGYGASFRHTEINVPGQVITSGEAEISLVVRMVATLGNYDYIVDWEFKKNGAIRVGVDLTGVLEVKATSYTSNDQITENVYGTLVAKNTIAVNHDHYLTYYLDLDVDGNGNSLVKAKLKTVRVTEVNKTSSRRKSYWTVVKETAKTEADGRVRLGSDPVELLIVNPNKKTKIGNTVGYRLIPEHLQATSLLTDDDYPELRAGYTKYPVWVTAYDRSERWAGGFYSDRSRGDDGLAVWSSRNREIENKDIVMWYNVGFHHIPYQEDFPVMPTLHGGFTLRPSNFFDNDPLIG.

The signal sequence occupies residues 1–19; it reads MNTSILAILFLIQCVFTLG. Residues asparagine 2, asparagine 34, asparagine 62, and asparagine 149 are each glycosylated (N-linked (GlcNAc...) asparagine). Cysteines 155 and 176 form a disulfide. A glycan (N-linked (GlcNAc...) asparagine) is linked at asparagine 235. A substrate-binding site is contributed by 308–319; that stretch reads FMDIGEFGFGRS. Aspartate 310 serves as the catalytic Proton acceptor. A disulfide bridge connects residues cysteine 329 and cysteine 355. Residue 395-400 participates in substrate binding; it reads LGNYDY. Residue tyrosine 398 is the Schiff-base intermediate with substrate; via topaquinone of the active site. Tyrosine 398 bears the 2',4',5'-topaquinone mark. Positions 453 and 455 each coordinate Cu cation. Mn(2+)-binding residues include aspartate 462 and aspartate 464. The N-linked (GlcNAc...) asparagine glycan is linked to asparagine 486. Mn(2+) contacts are provided by aspartate 607 and isoleucine 608. Histidine 618 provides a ligand contact to Cu cation.

It belongs to the copper/topaquinone oxidase family. In terms of assembly, homodimer. L-topaquinone is required as a cofactor. Requires Cu cation as cofactor. The cofactor is Zn(2+). Mn(2+) serves as cofactor. In terms of processing, topaquinone (TPQ) is generated by copper-dependent autoxidation of a specific tyrosyl residue. In terms of tissue distribution, expressed in the vascular tissues at the division/differentiation transition zone.

It localises to the secreted. It catalyses the reaction a primary methyl amine + O2 + H2O = an aldehyde + H2O2 + NH4(+). Its activity is regulated as follows. Repressed by semi-carbazide, a specific and irreversible inhibitor of copper amine oxidases. Functionally, oxidizes preferentially the aliphatic diamine putrescine with production of the corresponding aldehyde, ammonia and hydrogen peroxide. May be involved in the regulation of developmental programmed cell death (PCD) in both vascular tissue and the root cap. Required for jasmonic acid-(MeJA) mediated early protoxylem differentiation associated with putrescine levels reduction and H(2)O(2) accumulation in roots. The sequence is that of Primary amine oxidase 1 from Arabidopsis thaliana (Mouse-ear cress).